We begin with the raw amino-acid sequence, 326 residues long: Alkanal monooxygenase beta chain (326 aa).

The protein belongs to the bacterial luciferase oxidoreductase family. Heterodimer of an alpha and a beta chain.

It catalyses the reaction a long-chain fatty aldehyde + FMNH2 + O2 = a long-chain fatty acid + hnu + FMN + H2O + 2 H(+). Light-emitting reaction in luminous bacteria. The specific role of the beta subunit is unknown, but it is absolutely required for bioluminescence activity. This Photobacterium leiognathi protein is Alkanal monooxygenase beta chain (luxB).